Here is a 568-residue protein sequence, read N- to C-terminus: MASPALISETEAWKDLKAHLEGIKRTHLRELMGDTERCQSMMVEFDNIFLDYSRQQAIPDTIKKLYKLADAAHLKQKIDRMYNGDHINSTENRSVLHVALRAPRDSAICSDGKNVVPDVWNVLDKIKDFSDRVRNGSWIGATGKELKDVIAVGIGGSFLGPLFVHTALQTDPEASKNARGRELRFLANVDPIDVARNISGLNPETTLVVVVSKTFTTAETMLNARTLREWISSALGPTAVAKHMVAVSTNIPLVEKFGIDPNNAFAFWDWVGGRYSVCSAVGVLPLSLQYGFAVVEKFLQGAHSIDQHFSSAPFEKNIPVLLGLLSVWNVSFLGYPARAILPYSQALEKLAPHIQQVSMESNGKGVSIDGLPLPFESGEIDFGEPGTNGQHSFYQLIHQGRVIPCDFIGVVKSQQPVYLKGEVVNNHDELMSNFFAQPDALAYGKTPEQLKNENVAEHLIPHKTFTGNRPSLSILLPTLDAYRIGQLLAIYEHRVAVQGFVWGINSFDQWGVELGKSLATQVRKQLHGSRVKGEPVEGFNFSTKTLLTKYLEATSDVPADPSTLLPNI.

The active-site Proton donor is the Glu-360. Active-site residues include His-391 and Lys-516.

The protein belongs to the GPI family. As to quaternary structure, homodimer.

Its subcellular location is the cytoplasm. It carries out the reaction alpha-D-glucose 6-phosphate = beta-D-fructose 6-phosphate. It participates in carbohydrate degradation; glycolysis; D-glyceraldehyde 3-phosphate and glycerone phosphate from D-glucose: step 2/4. The protein is Glucose-6-phosphate isomerase, cytosolic 1 (PGIC1) of Clarkia mildrediae.